The chain runs to 862 residues: Cadherin-related family member 5 (862 aa).

Positions 1–28 (MGAPALLWPPLLLPLLTVLFGHLPGTLA) are cleaved as a signal peptide. Over 29-671 (QAQVCSANQT…GQRFSTVDMA (643 aa)) the chain is Extracellular. 9 N-linked (GlcNAc...) asparagine glycosylation sites follow: N36, N45, N135, N173, N201, N311, N408, N438, and N479. Cadherin domains follow at residues 40–127 (FTMN…APEF), 128–240 (PFTI…TPWF), 252–357 (IQAQ…PLQF), and 358–462 (SQSL…PPST). The disordered stretch occupies residues 452 to 658 (IQVSEREPPS…TTGPISGVGE (207 aa)). Residues 461 to 500 (STESPTPPEAGGTTGPSSNTTLETPSTSGTSQGPATTSSG) are compositionally biased toward low complexity. The span at 529-652 (LGISTSPQTA…GTSQPTTTGP (124 aa)) shows a compositional bias: polar residues. 3 repeat units span residues 545 to 575 (TQTPKPGTSQPMVPTPGASTSSQPATPSGSS), 576 to 606 (TQTPKPGTSQPMVPTPGASTSSQPATPSGSS), and 607 to 636 (TQTPRPGTSQPMVPTPGASTSSQPATPSGS). The interval 545–648 (TQTPKPGTSQ…TPKPGTSQPT (104 aa)) is 4 X 31 AA approximate tandem repeats. The stretch at 637–648 (TQTPKPGTSQPT) is one 4; truncated repeat. The helical transmembrane segment at 672 to 692 (VLGGVLGALLLLALIFLIILI) threads the bilayer. At 693–862 (HKHYRHRFTC…LGAVADNTYV (170 aa)) the chain is on the cytoplasmic side. A mediates interaction with USH1C and MYO7B and is required for proper localization to microvilli tips and function in microvilli organization region spans residues 693-862 (HKHYRHRFTC…LGAVADNTYV (170 aa)). Disordered stretches follow at residues 706–803 (KAKE…EGGY) and 821–862 (LNEP…NTYV). Phosphoserine occurs at positions 729, 751, and 755. The span at 739–768 (GPEPVQPPLRPPSPMSSSPTPPSSMPPSPQ) shows a compositional bias: pro residues. T758 carries the phosphothreonine modification. Phosphoserine is present on residues S766 and S783. Residues 791–801 (LTKERRPEGEG) show a composition bias toward basic and acidic residues. T825 is subject to Phosphothreonine. The span at 827-837 (DVDSASASGSE) shows a compositional bias: low complexity. Phosphoserine is present on residues S832, S834, and S836.

In terms of assembly, part of the IMAC/intermicrovillar adhesion complex/intermicrovillar tip-link complex composed of ANKS4B, MYO7B, USH1C, CDHR2 and CDHR5. Interacts (via cytoplasmic domain) with USH1C and MYO7B; required for proper localization of CDHR5 to microvilli tips and its function in brush border differentiation. N- and O-glycosylated. Expressed predominantly in kidney. Also detected in lung and small intestine.

The protein localises to the apical cell membrane. It localises to the cell projection. It is found in the microvillus membrane. Intermicrovillar adhesion molecule that forms, via its extracellular domain, calcium-dependent heterophilic complexes with CDHR2 on adjacent microvilli. Thereby, controls the packing of microvilli at the apical membrane of epithelial cells. Through its cytoplasmic domain, interacts with microvillus cytoplasmic proteins to form the intermicrovillar adhesion complex/IMAC. This complex plays a central role in microvilli and epithelial brush border differentiation. In Rattus norvegicus (Rat), this protein is Cadherin-related family member 5.